The sequence spans 1409 residues: Tensin-2 (1409 aa).

A disordered region spans residues 1-35; that stretch reads MKSSGPVERLLRALGRRDSSRAASRPRKAEPHSFR. The span at 9 to 20 shows a compositional bias: basic and acidic residues; it reads RLLRALGRRDSS. A Phorbol-ester/DAG-type zinc finger spans residues 31 to 79; that stretch reads PHSFREKVFRKKPPVCAVCKVTIDGTGVSCRVCKVATHRKCEAKVTSAC. Threonine 91 bears the Phosphothreonine mark. 2 positions are modified to phosphoserine: serine 118 and serine 120. In terms of domain architecture, Phosphatase tensin-type spans 122–294; sequence DPLMERRWDL…SYFSGLLSGS (173 aa). The active-site Phosphocysteine intermediate is the cysteine 231. One can recognise a C2 tensin-type domain in the interval 299–425; the sequence is SSPLFLHYVL…ASVEFVFSSS (127 aa). Position 455 is a phosphoserine (serine 455). Position 456 is a phosphotyrosine (tyrosine 456). The interval 462–536 is disordered; that stretch reads HHEDSVDGSL…SPGRPPPTAA (75 aa). Serine 466 bears the Phosphoserine mark. Phosphothreonine is present on threonine 474. Serine 481 is modified (phosphoserine). Residue tyrosine 483 is modified to Phosphotyrosine. Positions 491-506 are enriched in pro residues; the sequence is RQTPPAPSPEPPPPPM. Position 555 is an omega-N-methylarginine (arginine 555). Disordered regions lie at residues 562 to 582, 812 to 1098, and 1111 to 1130; these read AILDDEEQPTVGGGPHLGVYP, PGEG…SSPA, and LSDNVPQTPEPPTQESQSNV. Residues serine 820, serine 825, serine 830, serine 832, serine 835, and serine 845 each carry the phosphoserine modification. Polar residues-rich tracts occupy residues 900–918 and 930–940; these read SASSELSGPSTPLHTSSPV and RSPTSAPTQRL. Threonine 910 carries the phosphothreonine modification. A phosphoserine mark is found at serine 931, serine 941, and serine 972. Residues 968–982 show a composition bias toward pro residues; that stretch reads PLAPSPVSPTFPPSS. Threonine 977 bears the Phosphothreonine mark. Serine 991 and serine 1003 each carry phosphoserine. Over residues 1046–1056 the composition is skewed to pro residues; it reads PEPPQSSPTPA. In terms of domain architecture, SH2 spans 1140 to 1247; it reads WYKPHLSRDQ…SLPCCLRIPS (108 aa). Threonine 1182 bears the Phosphothreonine mark. Serine 1247 carries the phosphoserine modification. The PTB domain occupies 1275–1408; that stretch reads ACSVLYLTSV…FITKVLLGQR (134 aa).

Belongs to the PTEN phosphatase protein family. In terms of assembly, interacts with AXL. Interacts with SYK; leading to its phosphorylation. Interacts with SQSTM1 (via PB1 domain); the interaction leads to sequestration of TNS2 in cytoplasmic aggregates with SQSTM1 and promotes TNS2 ubiquitination and proteasomal degradation. In terms of processing, ubiquitinated following sequestration in cytoplasmic aggregates with SQSTM1, leading to proteasomal degradation. As to expression, detected in heart, kidney, brain, thymus, spleen, liver, placenta, lung, skeletal muscle and small intestine.

Its subcellular location is the cell junction. It is found in the focal adhesion. The protein resides in the cell membrane. The protein localises to the cytoplasm. It catalyses the reaction O-phospho-L-tyrosyl-[protein] + H2O = L-tyrosyl-[protein] + phosphate. In terms of biological role, tyrosine-protein phosphatase which regulates cell motility, proliferation and muscle-response to insulin. Phosphatase activity is mediated by binding to phosphatidylinositol-3,4,5-triphosphate (PtdIns(3,4,5)P3) via the SH2 domain. In muscles and under catabolic conditions, dephosphorylates IRS1 leading to its degradation and muscle atrophy. Negatively regulates PI3K-AKT pathway activation. Dephosphorylates nephrin NPHS1 in podocytes which regulates activity of the mTORC1 complex. Under normal glucose conditions, NPHS1 outcompetes IRS1 for binding to phosphatidylinositol 3-kinase (PI3K) which balances mTORC1 activity but high glucose conditions lead to up-regulation of TNS2, increased NPHS1 dephosphorylation and activation of mTORC1, contributing to podocyte hypertrophy and proteinuria. Required for correct podocyte morphology, podocyte-glomerular basement membrane interaction and integrity of the glomerular filtration barrier. Enhances RHOA activation in the presence of DLC1. Plays a role in promoting DLC1-dependent remodeling of the extracellular matrix. In Homo sapiens (Human), this protein is Tensin-2 (TNS2).